We begin with the raw amino-acid sequence, 169 residues long: Allophycocyanin subunit beta-18 (169 aa).

N72 bears the N4-methylasparagine mark. A (2R,3E)-phycocyanobilin-binding site is contributed by C82.

This sequence belongs to the phycobiliprotein family. Heterodimer of an alpha and a beta chain. Contains one covalently linked bilin chromophore.

The protein resides in the plastid. The protein localises to the chloroplast thylakoid membrane. Functionally, light-harvesting photosynthetic bile pigment-protein from the phycobiliprotein complex. Allophycocyanin has a maximum absorption at approximately 650 nanometers. The chain is Allophycocyanin subunit beta-18 (apcF) from Pyropia yezoensis (Susabi-nori).